The primary structure comprises 715 residues: ATP-dependent zinc metalloprotease FtsH (715 aa).

Topologically, residues 1-10 (MKNKNRGFFR) are cytoplasmic. The helical transmembrane segment at 11–31 (SSLSYAFVILAVIFLIYSFFG) threads the bilayer. At 32 to 137 (RSDGSVKHLS…KPAASNFWGS (106 aa)) the chain is on the extracellular side. Residues 138-158 (MLTLILPTLIMFALLYWMLIG) form a helical membrane-spanning segment. At 159–715 (SQRGQGGSGG…LLDAVNNKFD (557 aa)) the chain is on the cytoplasmic side. The segment at 167 to 187 (GGPGGIMSFGRSKAKPADPKQ) is disordered. 233–240 (GPPGTGKT) contributes to the ATP binding site. Histidine 455 contributes to the Zn(2+) binding site. Residue glutamate 456 is part of the active site. Zn(2+)-binding residues include histidine 459 and aspartate 531.

The protein in the central section; belongs to the AAA ATPase family. It in the C-terminal section; belongs to the peptidase M41 family. As to quaternary structure, homohexamer. Requires Zn(2+) as cofactor.

Its subcellular location is the cell membrane. Functionally, acts as a processive, ATP-dependent zinc metallopeptidase for both cytoplasmic and membrane proteins. Plays a role in the quality control of integral membrane proteins. Can complement an E.coli ftsH disruption mutant. This chain is ATP-dependent zinc metalloprotease FtsH, found in Oenococcus oeni (Leuconostoc oenos).